The following is a 591-amino-acid chain: DEAD-box ATP-dependent RNA helicase 30 (591 aa).

The disordered stretch occupies residues 1–109; that stretch reads MSSYDRRFAD…GRGGSSKREL (109 aa). Residues 72-103 show a composition bias toward gly residues; it reads FSVGRGGGRGGYGQYGDRNGGGNWGGGGGRGG. The short motif at 165 to 193 is the Q motif element; it reads KMFQDANFPDNILEAIAKLGFTEPTPIQA. A Helicase ATP-binding domain is found at 196 to 371; that stretch reads WPMALKGRDL…RQFLRDPYKA (176 aa). ATP is bound at residue 209 to 216; sequence AETGSGKT. A DEAD box motif is present at residues 319 to 322; that stretch reads DEAD. The 146-residue stretch at 399–544 folds into the Helicase C-terminal domain; the sequence is RLLTLLKQLM…VVPPTLSALV (146 aa). A disordered region spans residues 547–591; that stretch reads SGSGYGGSGGGRNFRPRGGGRGGGFGDKRSRSTSNFVPHGGKRTW. The segment covering 549 to 571 has biased composition (gly residues); that stretch reads SGYGGSGGGRNFRPRGGGRGGGF.

Belongs to the DEAD box helicase family. DDX5/DBP2 subfamily.

The protein resides in the nucleus. It carries out the reaction ATP + H2O = ADP + phosphate + H(+). Functionally, ATP-dependent RNA helicase involved nonsense-mediated mRNA decay and ribosome biogenesis through rRNA processing. This Arabidopsis thaliana (Mouse-ear cress) protein is DEAD-box ATP-dependent RNA helicase 30 (RH30).